A 90-amino-acid polypeptide reads, in one-letter code: Large ribosomal subunit protein bL27 (90 aa).

The disordered stretch occupies residues 1–22 (MAHKKSGGSSSNGRDSAGRRLG).

The protein belongs to the bacterial ribosomal protein bL27 family.

This Caulobacter sp. (strain K31) protein is Large ribosomal subunit protein bL27.